The following is a 441-amino-acid chain: Synaptotagmin-1 (441 aa).

Residues 1 to 69 lie on the Vesicular side of the membrane; sequence MVKLDFSSQD…DVVKEKVMQQ (69 aa). The helical transmembrane segment at 70-96 threads the bilayer; it reads TGMPEWAFVFLGFVFILLVLACAFCLI. Residues 97 to 441 lie on the Cytoplasmic side of the membrane; that stretch reads RKLFGKKRHG…EEGDKKDDKK (345 aa). 2 C2 domains span residues 159 to 278 and 292 to 425; these read KLGR…EEWK and SLGD…AQWH. Ca(2+)-binding residues include D190, D196, D248, F249, D250, S253, K254, D256, D323, D329, D383, D385, and D391.

The protein belongs to the synaptotagmin family. Requires Ca(2+) as cofactor. In terms of tissue distribution, localized to regions known to be rich in synapses and appears to be associated with synaptic vesicles. Also found in some non-neuronal secretory structures.

The protein localises to the cytoplasmic vesicle. The protein resides in the secretory vesicle. It is found in the synaptic vesicle membrane. Its subcellular location is the synapse. In terms of biological role, may have a regulatory role in the membrane interactions during trafficking of synaptic vesicles at the active zone of the synapse. It binds acidic phospholipids with a specificity that requires the presence of both an acidic head group and a diacyl backbone. Involved in necrotic cell death. This chain is Synaptotagmin-1 (snt-1), found in Caenorhabditis elegans.